Consider the following 296-residue polypeptide: Cytidine deaminase (296 aa).

2 CMP/dCMP-type deaminase domains span residues 52–167 (SPVE…YLPD) and 191–296 (QGHD…YISL). 93-95 (NQE) contributes to the substrate binding site. Residue H106 participates in Zn(2+) binding. E108 serves as the catalytic Proton donor. 2 residues coordinate Zn(2+): C133 and C136.

The protein belongs to the cytidine and deoxycytidylate deaminase family. In terms of assembly, homodimer. The cofactor is Zn(2+).

It carries out the reaction cytidine + H2O + H(+) = uridine + NH4(+). It catalyses the reaction 2'-deoxycytidine + H2O + H(+) = 2'-deoxyuridine + NH4(+). Its function is as follows. This enzyme scavenges exogenous and endogenous cytidine and 2'-deoxycytidine for UMP synthesis. In Mannheimia succiniciproducens (strain KCTC 0769BP / MBEL55E), this protein is Cytidine deaminase.